Consider the following 276-residue polypeptide: Stathmin domain-containing protein 1 (276 aa).

3 disordered regions span residues 1-40 (MGCG…ENCS), 61-106 (VQMG…RERQ), and 226-250 (GFEP…ATLI). Gly2 is lipidated: N-myristoyl glycine. Composition is skewed to polar residues over residues 68 to 78 (GTISENSPSPS) and 87 to 100 (DLVT…PQSL). The SLD domain occupies 118-244 (QGIIQSHSKV…GKPLKRKKSK (127 aa)).

The sequence is that of Stathmin domain-containing protein 1 (STMND1) from Homo sapiens (Human).